Consider the following 184-residue polypeptide: Threonylcarbamoyl-AMP synthase (184 aa).

Positions 1 to 184 (MNNLENIVEQ…IFTQHIFRQG (184 aa)) constitute a YrdC-like domain.

It belongs to the SUA5 family. TsaC subfamily.

It is found in the cytoplasm. It carries out the reaction L-threonine + hydrogencarbonate + ATP = L-threonylcarbamoyladenylate + diphosphate + H2O. Required for the formation of a threonylcarbamoyl group on adenosine at position 37 (t(6)A37) in tRNAs that read codons beginning with adenine. Catalyzes the conversion of L-threonine, HCO(3)(-)/CO(2) and ATP to give threonylcarbamoyl-AMP (TC-AMP) as the acyladenylate intermediate, with the release of diphosphate. The protein is Threonylcarbamoyl-AMP synthase of Actinobacillus pleuropneumoniae serotype 7 (strain AP76).